The chain runs to 175 residues: Alpha-crystallin B chain (175 aa).

Met1 is modified (N-acetylmethionine). Ser19 bears the Phosphoserine mark. Ser41 is a glycosylation site (O-linked (GlcNAc) serine). Phosphoserine is present on residues Ser45 and Ser59. Residues 56–164 (RAPSWIDTGL…PERTIPITRE (109 aa)) enclose the sHSP domain. His83 is a binding site for Zn(2+). The residue at position 92 (Lys92) is an N6-acetyllysine. Zn(2+) contacts are provided by His104, Glu106, His111, and His119. Positions 142–175 (VLTVNGPRKQAPGPERTIPITREEKPAVTAAPKK) are disordered. Residue Lys166 is modified to N6-acetyllysine. O-linked (GlcNAc) threonine glycosylation occurs at Thr170.

The protein belongs to the small heat shock protein (HSP20) family. As to quaternary structure, heteromer composed of three CRYAA and one CRYAB subunits. Aggregates with homologous proteins, including the small heat shock protein HSPB1, to form large heteromeric complexes. Inter-subunit bridging via zinc ions enhances stability, which is crucial as there is no protein turn over in the lens. Interacts with HSPBAP1 and TTN/titin. Interacts with TMEM109; in the cellular response to DNA damage. Interacts with DES; binds rapidly during early stages of DES filament assembly and a reduced binding seen in the later stages. Interacts with TMED10; the interaction mediates the translocation from the cytoplasm into the ERGIC (endoplasmic reticulum-Golgi intermediate compartment) and thereby secretion. Interacts with ATP6V1A and with MTOR, forming a ternary complex. As to expression, lens as well as other tissues.

The protein resides in the cytoplasm. The protein localises to the nucleus. Its subcellular location is the secreted. It localises to the lysosome. May contribute to the transparency and refractive index of the lens. Has chaperone-like activity, preventing aggregation of various proteins under a wide range of stress conditions. In lens epithelial cells, stabilizes the ATP6V1A protein, preventing its degradation by the proteasome. This chain is Alpha-crystallin B chain (CRYAB), found in Oryctolagus cuniculus (Rabbit).